Reading from the N-terminus, the 596-residue chain is Uptake hydrogenase large subunit (596 aa).

Positions 75, 78, 575, and 578 each coordinate Ni(2+).

Belongs to the [NiFe]/[NiFeSe] hydrogenase large subunit family. In terms of assembly, heterodimer of a large and a small subunit. The cofactor is Ni(2+).

It is found in the cell membrane. It catalyses the reaction H2 + A = AH2. Functionally, this enzyme recycles the H(2) produced by nitrogenase to increase the production of ATP and to protect nitrogenase against inhibition or damage by O(2) under carbon- or phosphate-limited conditions. The sequence is that of Uptake hydrogenase large subunit (hupB) from Bradyrhizobium diazoefficiens (strain JCM 10833 / BCRC 13528 / IAM 13628 / NBRC 14792 / USDA 110).